The sequence spans 1938 residues: Myosin-1 (1938 aa).

The disordered stretch occupies residues Met-1–Arg-27. The segment covering Arg-16–Arg-27 has biased composition (basic and acidic residues). The Myosin N-terminal SH3-like domain occupies Asp-30–Pro-80. A Myosin motor domain is found at Glu-84–Asp-785. Residue Lys-128 is modified to N6,N6,N6-trimethyllysine. Position 177–184 (Gly-177–Thr-184) interacts with ATP. 2 actin-binding regions span residues Leu-660 to Glu-682 and Arg-764 to Ala-778. The interval Gln-846–Asn-1170 is alpha-helical tailpiece (short S2). Positions Gln-846 to Lys-1938 are rodlike tail (S2 and LMM domains). Positions Gln-846–Lys-1938 form a coiled coil. The disordered stretch occupies residues Arg-919–Gln-951. Residues Gln-920–Gln-951 show a composition bias toward basic and acidic residues. Residues Asn-1171–Lys-1938 form a light meromyosin (LMM) region.

It belongs to the TRAFAC class myosin-kinesin ATPase superfamily. Myosin family. Muscle myosin is a hexameric protein that consists of 2 heavy chain subunits (MHC), 2 alkali light chain subunits (MLC) and 2 regulatory light chain subunits (MLC-2). Interacts with itr-1 (via c-terminal coiled coil domain). In terms of tissue distribution, found exclusively in the pharyngeal muscle.

It localises to the cytoplasm. The protein resides in the myofibril. Functionally, muscle contraction. In Caenorhabditis elegans, this protein is Myosin-1.